The chain runs to 592 residues: uncharacterized protein (592 aa).

6 consecutive transmembrane segments (helical) span residues 12-32 (IWIL…IFLL), 58-78 (PILF…ISLV), 102-122 (MGLF…SYYL), 191-211 (ISYT…GVEI), 214-234 (MMVF…FWLG), and 299-319 (FSGF…LIQV). The ABC transmembrane type-1 domain maps to 58–358 (PILFFLLIVA…FRSTYDNFAS (301 aa)). The region spanning 391 to 592 (VIFKNLSIQN…LQDKGQWQVL (202 aa)) is the ABC transporter domain. 424 to 431 (GKSGAGKT) lines the ATP pocket.

This sequence belongs to the ABC transporter superfamily.

The protein localises to the cell inner membrane. This is an uncharacterized protein from Haemophilus influenzae (strain ATCC 51907 / DSM 11121 / KW20 / Rd).